The primary structure comprises 468 residues: Tyrosine phenol-lyase (468 aa).

Lys-260 bears the N6-(pyridoxal phosphate)lysine mark.

This sequence belongs to the beta-eliminating lyase family. Homotetramer. It depends on pyridoxal 5'-phosphate as a cofactor.

It catalyses the reaction L-tyrosine + H2O = phenol + pyruvate + NH4(+). The polypeptide is Tyrosine phenol-lyase (Lacrimispora saccharolytica (strain ATCC 35040 / DSM 2544 / NRCC 2533 / WM1) (Clostridium saccharolyticum)).